The sequence spans 265 residues: Hydroxyethylthiazole kinase 2 (265 aa).

A substrate-binding site is contributed by M39. Residues K115 and T168 each contribute to the ATP site. Residue G195 coordinates substrate.

It belongs to the Thz kinase family. Mg(2+) is required as a cofactor.

The catalysed reaction is 5-(2-hydroxyethyl)-4-methylthiazole + ATP = 4-methyl-5-(2-phosphooxyethyl)-thiazole + ADP + H(+). The protein operates within cofactor biosynthesis; thiamine diphosphate biosynthesis; 4-methyl-5-(2-phosphoethyl)-thiazole from 5-(2-hydroxyethyl)-4-methylthiazole: step 1/1. Catalyzes the phosphorylation of the hydroxyl group of 4-methyl-5-beta-hydroxyethylthiazole (THZ). The protein is Hydroxyethylthiazole kinase 2 of Clostridium botulinum (strain Langeland / NCTC 10281 / Type F).